A 688-amino-acid chain; its full sequence is Methionine--tRNA ligase (688 aa).

The 'HIGH' region signature appears at 13-23 (PYANGPIHIGH). Residues Cys-144, Cys-147, Cys-157, and Cys-160 each coordinate Zn(2+). The 'KMSKS' region signature appears at 334–338 (KMSKS). ATP is bound at residue Lys-337. One can recognise a tRNA-binding domain in the interval 582–688 (DFAKIDLRVA…AGAVPGMRVR (107 aa)).

Belongs to the class-I aminoacyl-tRNA synthetase family. MetG type 1 subfamily. Homodimer. It depends on Zn(2+) as a cofactor.

The protein resides in the cytoplasm. The catalysed reaction is tRNA(Met) + L-methionine + ATP = L-methionyl-tRNA(Met) + AMP + diphosphate. Is required not only for elongation of protein synthesis but also for the initiation of all mRNA translation through initiator tRNA(fMet) aminoacylation. In Ralstonia nicotianae (strain ATCC BAA-1114 / GMI1000) (Ralstonia solanacearum), this protein is Methionine--tRNA ligase.